A 205-amino-acid polypeptide reads, in one-letter code: Probable calcium-binding protein CML41 (205 aa).

Residues 26 to 55 form a disordered region; sequence SFQNRRRSPKSNSSSTLNSPRSNSDDNNNI. Low complexity predominate over residues 35–54; sequence KSNSSSTLNSPRSNSDDNNN. EF-hand domains lie at 60 to 95, 96 to 131, 137 to 173, and 174 to 205; these read ASKE…VGEY, ISHE…RDLY, DGDG…LGES, and RTYG…MMTV. Residues D73, D75, D77, K79, E84, D109, D111, D113, S115, and D120 each contribute to the Ca(2+) site. Positions 187, 189, 191, and 198 each coordinate Ca(2+).

Functionally, potential calcium sensor. This is Probable calcium-binding protein CML41 (CML41) from Arabidopsis thaliana (Mouse-ear cress).